A 340-amino-acid chain; its full sequence is Ferrochelatase (340 aa).

Fe cation is bound by residues histidine 189 and glutamate 292.

Belongs to the ferrochelatase family.

Its subcellular location is the cytoplasm. It carries out the reaction heme b + 2 H(+) = protoporphyrin IX + Fe(2+). It functions in the pathway porphyrin-containing compound metabolism; protoheme biosynthesis; protoheme from protoporphyrin-IX: step 1/1. Catalyzes the ferrous insertion into protoporphyrin IX. The chain is Ferrochelatase from Pseudomonas fluorescens biotype C.